Reading from the N-terminus, the 97-residue chain is Exodeoxyribonuclease 7 small subunit (97 aa).

The interval 1 to 21 is disordered; sequence MAKTATPGACASDPGSGPLPE.

It belongs to the XseB family. In terms of assembly, heterooligomer composed of large and small subunits.

Its subcellular location is the cytoplasm. It carries out the reaction Exonucleolytic cleavage in either 5'- to 3'- or 3'- to 5'-direction to yield nucleoside 5'-phosphates.. Bidirectionally degrades single-stranded DNA into large acid-insoluble oligonucleotides, which are then degraded further into small acid-soluble oligonucleotides. In Burkholderia mallei (strain NCTC 10247), this protein is Exodeoxyribonuclease 7 small subunit.